The chain runs to 358 residues: Insulin gene enhancer protein ISL-2A (358 aa).

LIM zinc-binding domains are found at residues 27-80 (CVGC…CKRD) and 89-143 (CANC…RADH). A DNA-binding region (homeobox) is located at residues 190–249 (TTRVRTVLNEKQLHTLRTCYNANPRPDALMKEQLVEMTGLSPRVIRVWFQNKRCKDKKRS). Positions 325–335 (ESGSMGNSSGS) are enriched in low complexity. The tract at residues 325-358 (ESGSMGNSSGSDVTSLSSQLPDTPNSMVASPVDT) is disordered. Residues 336 to 358 (DVTSLSSQLPDTPNSMVASPVDT) are compositionally biased toward polar residues.

The protein localises to the nucleus. Functionally, binds to one of the cis-acting domain of the insulin gene enhancer. May be involved in subtype specialization of primary motoneurons. The sequence is that of Insulin gene enhancer protein ISL-2A (isl2a) from Oncorhynchus tshawytscha (Chinook salmon).